A 307-amino-acid chain; its full sequence is Ornithine carbamoyltransferase (307 aa).

Carbamoyl phosphate-binding positions include 50–53, glutamine 77, arginine 101, and 128–131; these read STRT and HPCQ. Residues asparagine 160, aspartate 224, and 228-229 each bind L-ornithine; that span reads SM. Residues 264-265 and arginine 292 each bind carbamoyl phosphate; that span reads CL.

Belongs to the aspartate/ornithine carbamoyltransferase superfamily. OTCase family. In terms of assembly, homotrimer.

The protein localises to the cytoplasm. The catalysed reaction is carbamoyl phosphate + L-ornithine = L-citrulline + phosphate + H(+). It participates in amino-acid biosynthesis; L-arginine biosynthesis; L-arginine from L-ornithine and carbamoyl phosphate: step 1/3. Reversibly catalyzes the transfer of the carbamoyl group from carbamoyl phosphate (CP) to the N(epsilon) atom of ornithine (ORN) to produce L-citrulline, which is a substrate for argininosuccinate synthetase, the enzyme involved in the final step in arginine biosynthesis. This chain is Ornithine carbamoyltransferase (argF), found in Mycobacterium bovis (strain ATCC BAA-935 / AF2122/97).